A 271-amino-acid polypeptide reads, in one-letter code: Mannosyl-3-phosphoglycerate phosphatase (271 aa).

Asp-13 functions as the Nucleophile in the catalytic mechanism. Residues Asp-13, Asp-15, and Asp-214 each coordinate Mg(2+).

It belongs to the HAD-like hydrolase superfamily. MPGP family. It depends on Mg(2+) as a cofactor.

The protein localises to the cytoplasm. The catalysed reaction is 2-O-(alpha-D-mannosyl)-3-phosphoglycerate + H2O = (2R)-2-O-(alpha-D-mannosyl)-glycerate + phosphate. This Shigella sonnei (strain Ss046) protein is Mannosyl-3-phosphoglycerate phosphatase (yedP).